The primary structure comprises 486 residues: ATP synthase subunit beta (486 aa).

Residue 170-177 (GGAGVGKT) participates in ATP binding.

It belongs to the ATPase alpha/beta chains family. As to quaternary structure, F-type ATPases have 2 components, CF(1) - the catalytic core - and CF(0) - the membrane proton channel. CF(1) has five subunits: alpha(3), beta(3), gamma(1), delta(1), epsilon(1). CF(0) has three main subunits: a(1), b(2) and c(9-12). The alpha and beta chains form an alternating ring which encloses part of the gamma chain. CF(1) is attached to CF(0) by a central stalk formed by the gamma and epsilon chains, while a peripheral stalk is formed by the delta and b chains.

The protein resides in the cell membrane. The catalysed reaction is ATP + H2O + 4 H(+)(in) = ADP + phosphate + 5 H(+)(out). Produces ATP from ADP in the presence of a proton gradient across the membrane. The catalytic sites are hosted primarily by the beta subunits. This chain is ATP synthase subunit beta, found in Kineococcus radiotolerans (strain ATCC BAA-149 / DSM 14245 / SRS30216).